A 441-amino-acid polypeptide reads, in one-letter code: uncharacterized protein (441 aa).

This is an uncharacterized protein from Methanocaldococcus jannaschii (strain ATCC 43067 / DSM 2661 / JAL-1 / JCM 10045 / NBRC 100440) (Methanococcus jannaschii).